We begin with the raw amino-acid sequence, 610 residues long: Elongation factor 4 (610 aa).

The tr-type G domain occupies 11–193; sequence KYIRNFSIVA…QIVTKIPAPA (183 aa). GTP-binding positions include 23-28 and 140-143; these read DHGKST and NKID.

The protein belongs to the TRAFAC class translation factor GTPase superfamily. Classic translation factor GTPase family. LepA subfamily.

The protein localises to the cell membrane. The catalysed reaction is GTP + H2O = GDP + phosphate + H(+). In terms of biological role, required for accurate and efficient protein synthesis under certain stress conditions. May act as a fidelity factor of the translation reaction, by catalyzing a one-codon backward translocation of tRNAs on improperly translocated ribosomes. Back-translocation proceeds from a post-translocation (POST) complex to a pre-translocation (PRE) complex, thus giving elongation factor G a second chance to translocate the tRNAs correctly. Binds to ribosomes in a GTP-dependent manner. In Levilactobacillus brevis (strain ATCC 367 / BCRC 12310 / CIP 105137 / JCM 1170 / LMG 11437 / NCIMB 947 / NCTC 947) (Lactobacillus brevis), this protein is Elongation factor 4.